The following is a 393-amino-acid chain: Ribonucleoside-diphosphate reductase subunit M2 (393 aa).

At S18 the chain carries Phosphoserine. D142, E173, and H176 together coordinate Fe cation. Residue Y180 is part of the active site. Fe cation contacts are provided by E236, E270, and H273.

The protein belongs to the ribonucleoside diphosphate reductase small chain family. As to quaternary structure, heterodimer of a large and a small subunit. Fe cation serves as cofactor.

It is found in the cytoplasm. The catalysed reaction is a 2'-deoxyribonucleoside 5'-diphosphate + [thioredoxin]-disulfide + H2O = a ribonucleoside 5'-diphosphate + [thioredoxin]-dithiol. In terms of biological role, provides the precursors necessary for DNA synthesis. Catalyzes the biosynthesis of deoxyribonucleotides from the corresponding ribonucleotides. This chain is Ribonucleoside-diphosphate reductase subunit M2 (RnrS), found in Drosophila melanogaster (Fruit fly).